A 671-amino-acid chain; its full sequence is K(+)-insensitive pyrophosphate-energized proton pump (671 aa).

5 helical membrane-spanning segments follow: residues 4–24, 57–77, 79–99, 128–148, and 156–176; these read LIFT…FFAK, TIAV…DEGL, IAAG…IGMS, AVTG…LYIL, and VGFG…GGIF. K178 contacts substrate. D181, D185, N208, and D211 together coordinate Mg(2+). 6 consecutive transmembrane segments (helical) span residues 223 to 243, 249 to 269, 285 to 305, 310 to 330, 365 to 385, and 393 to 413; these read LFET…LIIG, VLYP…SVFF, GVGG…GFLM, FFYV…VTEY, TLVP…IVGG, and LYGI…IVAL. D421 lines the Mg(2+) pocket. The next 4 membrane-spanning stretches (helical) occupy residues 452-472, 490-510, 558-578, and 579-599; these read AVTK…LFAD, VVLS…AVMM, MAMP…FLGP, and EALA…ALMM. Residues D607, D633, and D637 each contribute to the Ca(2+) site. Position 640 (K640) interacts with substrate. Residues 650-670 form a helical membrane-spanning segment; that stretch reads LIKVVNMVAILFSPLIIGGGF.

Belongs to the H(+)-translocating pyrophosphatase (TC 3.A.10) family. K(+)-insensitive subfamily. In terms of assembly, homodimer. It depends on Mg(2+) as a cofactor.

Its subcellular location is the cell membrane. The enzyme catalyses diphosphate + H2O + H(+)(in) = 2 phosphate + 2 H(+)(out). Proton pump that utilizes the energy of pyrophosphate hydrolysis as the driving force for proton movement across the membrane. Generates a proton motive force. In Methanosarcina mazei (strain ATCC BAA-159 / DSM 3647 / Goe1 / Go1 / JCM 11833 / OCM 88) (Methanosarcina frisia), this protein is K(+)-insensitive pyrophosphate-energized proton pump.